Reading from the N-terminus, the 353-residue chain is Uroporphyrinogen decarboxylase (353 aa).

Substrate is bound by residues Arg-30 to Arg-34, Asp-79, Tyr-154, Ser-209, and His-332.

This sequence belongs to the uroporphyrinogen decarboxylase family. As to quaternary structure, homodimer.

It is found in the cytoplasm. The enzyme catalyses uroporphyrinogen III + 4 H(+) = coproporphyrinogen III + 4 CO2. It participates in porphyrin-containing compound metabolism; protoporphyrin-IX biosynthesis; coproporphyrinogen-III from 5-aminolevulinate: step 4/4. Functionally, catalyzes the decarboxylation of four acetate groups of uroporphyrinogen-III to yield coproporphyrinogen-III. In Mycolicibacterium smegmatis (strain ATCC 700084 / mc(2)155) (Mycobacterium smegmatis), this protein is Uroporphyrinogen decarboxylase.